Reading from the N-terminus, the 79-residue chain is SALFLAMHYTPDTITAFSSVTHICRDVNYGWLIRYIHANGASLFFICLYLHIGRGIYYGSYSYMETWNIGIILLILTMA.

Helical transmembrane passes span 1–7, 31–52, and 67–79; these read SALFLAM, WLIRYIHANGASLFFICLYLHI, and WNIGIILLILTMA. Positions 37 and 51 each coordinate heme b.

This sequence belongs to the cytochrome b family. The cytochrome bc1 complex contains 11 subunits: 3 respiratory subunits (MT-CYB, CYC1 and UQCRFS1), 2 core proteins (UQCRC1 and UQCRC2) and 6 low-molecular weight proteins (UQCRH/QCR6, UQCRB/QCR7, UQCRQ/QCR8, UQCR10/QCR9, UQCR11/QCR10 and a cleavage product of UQCRFS1). This cytochrome bc1 complex then forms a dimer. The cofactor is heme b.

The protein localises to the mitochondrion inner membrane. Its function is as follows. Component of the ubiquinol-cytochrome c reductase complex (complex III or cytochrome b-c1 complex) that is part of the mitochondrial respiratory chain. The b-c1 complex mediates electron transfer from ubiquinol to cytochrome c. Contributes to the generation of a proton gradient across the mitochondrial membrane that is then used for ATP synthesis. The chain is Cytochrome b (MT-CYB) from Dipodomys heermanni (Heermann's kangaroo rat).